The chain runs to 164 residues: Cell division protein SepF (164 aa).

The tract at residues 21–71 (YQQGQQPAQQQQSPVQAVPTPAPAPQQQAKRAPVTPLHKPSTTTRNAAPAE) is disordered. A compositionally biased stretch (low complexity) spans 22 to 54 (QQGQQPAQQQQSPVQAVPTPAPAPQQQAKRAPV).

Belongs to the SepF family. As to quaternary structure, homodimer. Interacts with FtsZ.

It is found in the cytoplasm. Its function is as follows. Cell division protein that is part of the divisome complex and is recruited early to the Z-ring. Probably stimulates Z-ring formation, perhaps through the cross-linking of FtsZ protofilaments. Its function overlaps with FtsA. The chain is Cell division protein SepF from Clavibacter michiganensis subsp. michiganensis (strain NCPPB 382).